Reading from the N-terminus, the 476-residue chain is NADH-quinone oxidoreductase subunit N (476 aa).

13 helical membrane passes run 7 to 27, 33 to 53, 59 to 79, 100 to 120, 122 to 142, 156 to 176, 199 to 219, 237 to 257, 265 to 285, 305 to 325, 363 to 383, 399 to 419, and 437 to 457; these read LTVEILTAALGLGLLALGLLV, RGIAYVATAGLAGILAAAFGM, VVLGGYVIDPFGTYFKILFLV, GEYYALLVLATLGMMVLASSG, LVSLYLGLELMTITFCILAAF, YVLLGAMSSAIFLYGLSLVYG, LLLGTIFILAGFAFKVTAVPF, FLSVASKAAAFAALVRVFFGA, WVQLFIALAVLTIVLGNLVAI, LLLGIVSFSVLGVGAVMYYAM, VAALMLFSLLSLAGIPPMAGF, IWLAILGILMSMVSVYYYLLV, and VAPGLQVAMVVSLLILFILGI.

This sequence belongs to the complex I subunit 2 family. NDH-1 is composed of 14 different subunits. Subunits NuoA, H, J, K, L, M, N constitute the membrane sector of the complex.

Its subcellular location is the cell membrane. It carries out the reaction a quinone + NADH + 5 H(+)(in) = a quinol + NAD(+) + 4 H(+)(out). Functionally, NDH-1 shuttles electrons from NADH, via FMN and iron-sulfur (Fe-S) centers, to quinones in the respiratory chain. The immediate electron acceptor for the enzyme in this species is believed to be a menaquinone. Couples the redox reaction to proton translocation (for every two electrons transferred, four hydrogen ions are translocated across the cytoplasmic membrane), and thus conserves the redox energy in a proton gradient. This chain is NADH-quinone oxidoreductase subunit N, found in Moorella thermoacetica (strain ATCC 39073 / JCM 9320).